The following is a 104-amino-acid chain: Large ribosomal subunit protein bL21 (104 aa).

Belongs to the bacterial ribosomal protein bL21 family. In terms of assembly, part of the 50S ribosomal subunit. Contacts protein L20.

Functionally, this protein binds to 23S rRNA in the presence of protein L20. In Streptococcus pneumoniae serotype 2 (strain D39 / NCTC 7466), this protein is Large ribosomal subunit protein bL21.